The primary structure comprises 182 residues: Transcription termination/antitermination protein NusG (182 aa).

Belongs to the NusG family.

Participates in transcription elongation, termination and antitermination. This Chlamydia pneumoniae (Chlamydophila pneumoniae) protein is Transcription termination/antitermination protein NusG.